A 310-amino-acid polypeptide reads, in one-letter code: MEFKHVSVLLNECIEALNIKENGIYVDGTLGGAGHSSHILSNLSKDGMLIGIDQDQDALKAAKEKLKDFENVKYVHSNFYNIDSILNDLDIEKVDGILMDLGVSSYQLDEASRGFSYMKDAPLDMRMNRENDFSAYNIVNNYDEDSLYKIIKDYGEERFAKRIANFIINRRIEKPIETTFELVDIIKAAIPAKMRREGPHPAKRTFQAIRIEVNSELKILNKTIEDGVNRLNKGGRMAIITFHSLEDRIVKLKFRELENPCTCPKEFPMCICGKSPLVKNIAKKGIAPTKEEIEENPRSRSAKLRVIEKL.

Residues 33–35 (AGH), aspartate 53, phenylalanine 79, aspartate 100, and glutamine 107 contribute to the S-adenosyl-L-methionine site.

It belongs to the methyltransferase superfamily. RsmH family.

The protein localises to the cytoplasm. The catalysed reaction is cytidine(1402) in 16S rRNA + S-adenosyl-L-methionine = N(4)-methylcytidine(1402) in 16S rRNA + S-adenosyl-L-homocysteine + H(+). Its function is as follows. Specifically methylates the N4 position of cytidine in position 1402 (C1402) of 16S rRNA. The sequence is that of Ribosomal RNA small subunit methyltransferase H from Clostridium beijerinckii (strain ATCC 51743 / NCIMB 8052) (Clostridium acetobutylicum).